The primary structure comprises 216 residues: DNA-binding protein HupB (216 aa).

Position 2 (Gly-2) is a propeptide, removed; alternate. Met-3 bears the N-acetylmethionine mark. The interval Met-3–Ser-92 is bacterial histone-like domain. Residues Lys-5, Lys-74, Lys-88, Lys-105, Lys-118, and Lys-135 each carry the N6-acetyllysine modification. The interval Pro-102–Lys-216 is disordered. The interval Ala-103 to Lys-216 is degenerate repeats region. Residues Val-104–Lys-114 show a composition bias toward low complexity. Over residues Lys-115–Lys-216 the composition is skewed to basic residues. N6,N6,N6-trimethyllysine is present on Lys-140. 2 positions are modified to N6-acetyllysine: Lys-148 and Lys-169.

This sequence belongs to the bacterial histone-like protein family. Long actinobacterial subfamily. As to quaternary structure, oligomerizes. Interacts with topoisomerase 1 (topA). Interacts with Eis. Interacts with antigen 85 proteins (fbpA, fbpB, fbpC). In terms of processing, probably acetylated by Eis in vivo. In vitro acetylated by Eis (strain H37Rv and H37Ra) on many more residues than those identified in vivo. Deacetylated in vitro by NAD-dependent protein deacylase (Rv1151c). Trimethylated on Lys-140 by human SUV39H1; trimethylation inhibits mycobacterial growth. SUV39H1 probably also trimethylates another residue. Post-translationally, probably succinylated by Rv0802c and desuccinylated by NAD-dependent protein deacylase (Rv1151c).

The protein localises to the cytoplasm. It localises to the nucleoid. Its subcellular location is the secreted. It is found in the cell wall. The catalysed reaction is 4 Fe(2+) + O2 + 4 H(+) = 4 Fe(3+) + 2 H2O. Its function is as follows. A nucleoid-associated protein (NAP) that probably plays a role in chromosome compactation. Binds DNA non-specifically, with greater affinity for supercoiled than linear DNA, binds well to nicked DNA, gapped and cruciform DNA. Has a preference for A:T rich DNA. Required for activation of the mtbB operon. Binds the mtbB promoter in the presence of iron, binding is seen with as little as 25 uM Fe(2+) and increases with increasing Fe(2+). RNase E and HupB jointly contribute to cellular adaptation to changing growth conditions and survival during antibiotic treatment and in the host. Plays a role in stress survival. Stimulates supercoiling relaxation by topoisomerase 1 (Top1, topA). In terms of biological role, binds Fe(3+) but not Fe(2+). Has ferroxidase activity, converts Fe(2+) into Fe(3+) and in the presence of H(2)O(2) prevents the generation of hydroxyl radicals (the Fenton reaction). Protects DNA from damage in the presence of FeSO(4) and H(2)O(2). May function in iron storage. Involved in iron uptake by bacteria (either Fe(3+) or extracellular carboxymycobactin); antibodies against HupB block uptake of both. Following uptake iron is mostly found in the iron siderophores carboxymycobactin (CMb, extracellular) or mycobactin (Mb, lipophilic). Facilitates transfer of iron from CMb to Mb when liposomes plus a cell wall lysate are incubated with CMb. Binds iron, ferri-CMb and ferri-Mb; has 10-fold higher affinity for ferri-Mb. Suggested to transfer iron from CBm to Mb at the cell membrane. Functionally, required for biofilm formation; trimethylation by recombinant human SUV39H1 (a histone methyltransferase) inhibits biofilm formation. Induces lymphoproliferation, particularly in health tuberculin reactors, and is immunogenic. Maybe involved in pathogenesis of inflammatory bowel disease (IBD) in patients with ulcerative colitis and Crohn disease (CD). Bound by anti-neutrophil cytoplasmic antibodies (pANCA), which are a hallmark of IBD. The binding is due to pANCA directed against H1-3 cross-reacting with DBH epitopes. In CD, target of a strong IgA response. May play a role in cell wall assembly. In vitro at low levels enhances formation of TMM and TDM by antigen 85 proteins (fbpA, fbpB, fbpC), at higher levels inhibits TMM and TDM formation. In Mycobacterium tuberculosis (strain ATCC 25618 / H37Rv), this protein is DNA-binding protein HupB.